We begin with the raw amino-acid sequence, 508 residues long: GTPase Obg (508 aa).

The Obg domain maps to 2-159 (ARFVDRVVLH…HDVILELKSM (158 aa)). The region spanning 160–341 (ADIGLVGFPS…LKYAMLDLVQ (182 aa)) is the OBG-type G domain. Residues 166–173 (GFPSAGKS), 191–195 (FTTLQ), 212–215 (DVPG), 292–295 (NKAD), and 322–324 (SAV) contribute to the GTP site. Mg(2+)-binding residues include serine 173 and threonine 193. The OCT domain occupies 364–444 (DARKKNKDFE…IGEVSFEWEP (81 aa)).

The protein belongs to the TRAFAC class OBG-HflX-like GTPase superfamily. OBG GTPase family. In terms of assembly, monomer. Mg(2+) is required as a cofactor.

The protein localises to the cytoplasm. Its function is as follows. An essential GTPase which binds GTP, GDP and possibly (p)ppGpp with moderate affinity, with high nucleotide exchange rates and a fairly low GTP hydrolysis rate. Plays a role in control of the cell cycle, stress response, ribosome biogenesis and in those bacteria that undergo differentiation, in morphogenesis control. In Corynebacterium diphtheriae (strain ATCC 700971 / NCTC 13129 / Biotype gravis), this protein is GTPase Obg.